We begin with the raw amino-acid sequence, 435 residues long: Maltodextrin transport system permease protein MalC (435 aa).

10 helical membrane passes run 34–54, 73–93, 130–150, 199–219, 230–250, 263–283, 294–314, 338–358, 371–391, and 404–424; these read GFIFLGVTIVFVLYFLALATP, FMLIRGAFHLIFVIVYVLFYF, YLLIIPSYVAMTFAIIFPVIV, IIWALAASTLQIVIGIFTAII, IFGVIFLLPWAVPAFITILTF, TQVLPILAKFLPFLDGALIPW, LIMMQGWLGFPYIYVLTLGIL, NITFPMILAVAAPTLISQYTF, GGGPGSVGGGAGSTDILISWI, and MAAAVTLIISIIVISISMIAF. One can recognise an ABC transmembrane type-1 domain in the interval 195 to 423; sequence LSWTIIWALA…IIVISISMIA (229 aa).

The protein belongs to the binding-protein-dependent transport system permease family. MalFG subfamily.

The protein resides in the cell membrane. Its function is as follows. Part of the binding-protein-dependent transport system for maltodextrin; probably responsible for the translocation of the substrate across the membrane. The protein is Maltodextrin transport system permease protein MalC (malC) of Streptococcus pneumoniae serotype 4 (strain ATCC BAA-334 / TIGR4).